The sequence spans 279 residues: tRNA (carboxymethyluridine(34)-5-O)-methyltransferase (279 aa).

A disordered region spans residues 172-236; the sequence is KSKSKPKTKS…QQQDQEQERE (65 aa). The segment covering 200–229 has biased composition (basic and acidic residues); it reads PKERSEYLQRWKEEQQRSKSLDDNDEKQQQ.

Interacts with TRM112.

The protein localises to the cytoplasm. Its subcellular location is the nucleus. The catalysed reaction is 5-(carboxymethyl)uridine(34) in tRNA + S-adenosyl-L-methionine = 5-(2-methoxy-2-oxoethyl)uridine(34) in tRNA + S-adenosyl-L-homocysteine. Required for the methylation of the wobble bases at position 34 in tRNA. Appears to have a role in stress-response. The sequence is that of tRNA (carboxymethyluridine(34)-5-O)-methyltransferase (TRM9) from Saccharomyces cerevisiae (strain ATCC 204508 / S288c) (Baker's yeast).